The primary structure comprises 96 residues: Co-chaperonin GroES (96 aa).

The protein belongs to the GroES chaperonin family. In terms of assembly, heptamer of 7 subunits arranged in a ring. Interacts with the chaperonin GroEL.

It is found in the cytoplasm. Its function is as follows. Together with the chaperonin GroEL, plays an essential role in assisting protein folding. The GroEL-GroES system forms a nano-cage that allows encapsulation of the non-native substrate proteins and provides a physical environment optimized to promote and accelerate protein folding. GroES binds to the apical surface of the GroEL ring, thereby capping the opening of the GroEL channel. The protein is Co-chaperonin GroES of Acidithiobacillus ferrooxidans (strain ATCC 23270 / DSM 14882 / CIP 104768 / NCIMB 8455) (Ferrobacillus ferrooxidans (strain ATCC 23270)).